The primary structure comprises 282 residues: Gap junction Cx32.7 protein (282 aa).

At 2–13 (GEWDLLGRLLDK) the chain is on the cytoplasmic side. Residues 14–36 (VQSHSTVIGKVWLTVLFVFRILV) form a helical membrane-spanning segment. Topologically, residues 37–76 (LRTGADRVWGDEQSDFVCNTQQPGCENVCYDLAFPISHVR) are extracellular. Residues 77–99 (FWFLQIIAVATPKLLYLGHVLHV) traverse the membrane as a helical segment. Over 100 to 148 (IHAEKKMKERMKKQAELDDQTNLFLRKAYKVPKYTKSSGKISIRGRLLR) the chain is Cytoplasmic. The helical transmembrane segment at 149-171 (SYVYHLVAKIILEVLFIVGQYFL) threads the bilayer. The Extracellular segment spans residues 172–203 (YGFTLDTRYVCTRFPCPHKVDCFLSRPTEKSV). The chain crosses the membrane as a helical span at residues 204-226 (IIWFMLVAAFVSLFLSLVELFYL). Residues 227-282 (CVKAAKECMARRQDYTVTPVTPPLLARKSFKSHKEVFQNCVNEPASPENNMEEVHI) lie on the Cytoplasmic side of the membrane.

It belongs to the connexin family. Alpha-type (group II) subfamily. In terms of assembly, a connexon is composed of a hexamer of connexins. As to expression, expressed equally in incompetent and competent ovaries.

The protein localises to the cell membrane. The protein resides in the cell junction. Its subcellular location is the gap junction. One gap junction consists of a cluster of closely packed pairs of transmembrane channels, the connexons, through which materials of low MW diffuse from one cell to a neighboring cell. This Micropogonias undulatus (Atlantic croaker) protein is Gap junction Cx32.7 protein.